We begin with the raw amino-acid sequence, 122 residues long: Large ribosomal subunit protein uL18 (122 aa).

Belongs to the universal ribosomal protein uL18 family. In terms of assembly, part of the 50S ribosomal subunit; part of the 5S rRNA/L5/L18/L25 subcomplex. Contacts the 5S and 23S rRNAs.

In terms of biological role, this is one of the proteins that bind and probably mediate the attachment of the 5S RNA into the large ribosomal subunit, where it forms part of the central protuberance. The polypeptide is Large ribosomal subunit protein uL18 (Synechococcus sp. (strain JA-2-3B'a(2-13)) (Cyanobacteria bacterium Yellowstone B-Prime)).